We begin with the raw amino-acid sequence, 399 residues long: Lysosomal acid lipase/cholesteryl ester hydrolase (399 aa).

A signal peptide spans 1 to 27 (MKMRFLGLVVCLVLWTLHSEASGGKLT). Residues 28–76 (AVNPETNMNVSEIISYWGFPSEEYLVETEDGYILCLNRIPHGRKNHSDK) constitute a propeptide, removed in mature form. Asparagine 36, asparagine 72, asparagine 101, and asparagine 161 each carry an N-linked (GlcNAc...) asparagine glycan. Positions 80–380 (PVVFLQHGLL…EWEHLDFIWG (301 aa)) constitute an AB hydrolase-1 domain. The active-site Charge relay system is the serine 174. Asparagine 273 and asparagine 321 each carry an N-linked (GlcNAc...) asparagine glycan. Catalysis depends on histidine 374, which acts as the Charge relay system.

Belongs to the AB hydrolase superfamily. Lipase family. Monomer. Post-translationally, glycosylation is not essential for catalytic activity.

Its subcellular location is the lysosome. The catalysed reaction is a sterol ester + H2O = a sterol + a fatty acid + H(+). The enzyme catalyses cholesteryl (9Z-octadecenoate) + H2O = cholesterol + (9Z)-octadecenoate + H(+). It carries out the reaction a triacylglycerol + H2O = a 1,2-diacylglycerol + a fatty acid + H(+). It catalyses the reaction 1,2-di-(9Z-octadecenoyl)-glycerol + (9Z)-octadecenoate + H(+) = 1,2,3-tri-(9Z-octadecenoyl)-glycerol + H2O. The catalysed reaction is a 1,2-diacylglycerol + H2O = a 1-acylglycerol + a fatty acid + H(+). The enzyme catalyses 1,2-di-(9Z-octadecenoyl)-glycerol + H2O = 1-(9Z-octadecenoyl)-glycerol + (9Z)-octadecenoate + H(+). It carries out the reaction a 1,3-diacylglycerol + H2O = a 1-acylglycerol + a fatty acid + H(+). It catalyses the reaction 1,3-di-(9Z-octadecenoyl)-glycerol + H2O = 1-(9Z-octadecenoyl)-glycerol + (9Z)-octadecenoate + H(+). Catalyzes the deacylation of cholesteryl ester core lipids of endocytosed low density lipoproteins to generate free fatty acids and cholesterol. Hydrolyzes triglycerides (1,2,3-triacylglycerol) and diglycerides (such as 1,2-diacylglycerol and 1,3-diacylglycerol) with preference for the acyl moieties at the sn-1 or sn-3 positions. The chain is Lysosomal acid lipase/cholesteryl ester hydrolase (LIPA) from Macaca fascicularis (Crab-eating macaque).